The following is a 704-amino-acid chain: Neutral ceramidase (704 aa).

Residues 1–23 (MAISKIAFLALIALSGLCGLASA) form the signal peptide. Residue asparagine 230 is glycosylated (N-linked (GlcNAc...) asparagine). The Nucleophile role is filled by serine 276. Residues asparagine 362, asparagine 550, and asparagine 598 are each glycosylated (N-linked (GlcNAc...) asparagine).

The protein belongs to the neutral ceramidase family. In terms of processing, N-glycosylated.

It is found in the secreted. The enzyme catalyses an N-acylsphing-4-enine + H2O = sphing-4-enine + a fatty acid. Functionally, hydrolyzes the sphingolipid ceramide into sphingosine and free fatty acid at an optimal pH of 6.5-7.5. Acts as a key regulator of sphingolipid signaling metabolites by generating sphingosine at the cell surface. This chain is Neutral ceramidase (CDase), found in Drosophila pseudoobscura pseudoobscura (Fruit fly).